Reading from the N-terminus, the 910-residue chain is Auxilin (910 aa).

3 repeat units span residues 33–36 (NLKD), 37–40 (NLKD), and 41–44 (TLKD). The tract at residues 33 to 44 (NLKDNLKDTLKD) is 3 X 4 AA approximate tandem repeats. Positions 52–219 (SVTSYTKGDL…GYMCDLLADK (168 aa)) constitute a Phosphatase tensin-type domain. Residue Ser109 is modified to Phosphoserine. Residue Cys161 is the Phosphocysteine intermediate of the active site. The C2 tensin-type domain occupies 225 to 363 (FKPLTIKSIT…FQVTLDVELQ (139 aa)). The SH3-binding motif lies at 406–414 (PIDIPPDNP). Positions 448-772 (QESEQSDDEL…RGKAAANLEG (325 aa)) are disordered. Residues Ser450, Ser453, Ser560, and Ser567 each carry the phosphoserine modification. Residues 547–569 (PSGPTSTQSTPRRSATSTSASPT) are compositionally biased toward low complexity. Residues 596–626 (FLNTASASSDPFLQPTRSPSPTVHASSTPAV) are compositionally biased toward polar residues. Low complexity predominate over residues 651-666 (SAATSPTGSSHGTPTH). Over residues 715-725 (MGGGWQQGGGY) the composition is skewed to gly residues. The segment covering 732–758 (SKPQSSMPHSSPQNRPNYNVSFSSMPG) has biased composition (polar residues). Residues 846 to 910 (TKWKPVGMAD…FENQGQKPLY (65 aa)) form the J domain.

Forms a complex composed of HSPA8, CLTC and DNAJC6. Interacts with HSPA8/HSC70 in an ATP-dependent manner; this interaction stimulates the HSPA8's ATPase activity. Interacts with CLTC; this interaction produces a local change in heavy-chain contacts, creating a detectable global distortion of the clathrin coat. Interacts with AP2A2. Interacts with DNM1(GTP-bound form); this interaction allows clathrin-coated vesicle (CCV) formation at the plasma membrane. Post-translationally, the N-terminus is blocked. Phosphorylation at Ser-567 modulates its ability to bind CLTC and therefore the synaptic vesicle endocytosis (SVE). As to expression, brain.

It localises to the cytoplasmic vesicle. The protein localises to the clathrin-coated vesicle. May act as a protein phosphatase and/or a lipid phosphatase. Co-chaperone that recruits HSPA8/HSC70 to clathrin-coated vesicles (CCVs) and promotes the ATP-dependent dissociation of clathrin from CCVs and participates in clathrin-mediated endocytosis of synaptic vesicles and their recycling and also in intracellular trafficking. Firstly, binds tightly to the clathrin cages, at a ratio of one DNAJC6 per clathrin triskelion. The HSPA8:ATP complex then binds to the clathrin-auxilin cage, initially at a ratio of one HSPA8 per triskelion leading to ATP hydrolysis stimulation and causing a conformational change in the HSPA8. This cycle is repeated three times to drive to a complex containing the clathrin-auxilin cage associated to three HSPA8:ADP complex. The ATP hydrolysis of the third HSPA8:ATP complex leads to a concerted dismantling of the cage into component triskelia. Then, dissociates from the released triskelia and be recycled to initiate another cycle of HSPA8's recruitment. Also acts during the early steps of clathrin-coated vesicle (CCV) formation through its interaction with the GTP bound form of DNM1. The polypeptide is Auxilin (Bos taurus (Bovine)).